Reading from the N-terminus, the 689-residue chain is Glycine--tRNA ligase beta subunit (689 aa).

It belongs to the class-II aminoacyl-tRNA synthetase family. Tetramer of two alpha and two beta subunits.

The protein localises to the cytoplasm. It carries out the reaction tRNA(Gly) + glycine + ATP = glycyl-tRNA(Gly) + AMP + diphosphate. This chain is Glycine--tRNA ligase beta subunit, found in Actinobacillus pleuropneumoniae serotype 3 (strain JL03).